The chain runs to 497 residues: Alkene monooxygenase system, oxygenase component subunit alpha (497 aa).

Fe cation-binding residues include glutamate 104, glutamate 134, histidine 137, glutamate 197, glutamate 231, and histidine 234.

This sequence belongs to the TmoA/XamoA family. The alkene monooxygenase multicomponent enzyme system is composed of an electron transfer component and a monooxygenase component interacting with the effector protein XamoD. The electron transfer component is composed of a ferredoxin reductase (XamoF) and a ferredoxin (XamoC), and the monooxygenase component is formed by a heterohexamer (dimer of heterotrimers) of two alpha subunits (XamoA), two beta subunits (XamoE) and two gamma subunits (XamoB). Fe(2+) is required as a cofactor.

It localises to the cytoplasm. It catalyses the reaction propene + NADH + O2 + H(+) = 1,2-epoxypropane + NAD(+) + H2O. Inhibited by propyne. Functionally, component of the alkene monooxygenase multicomponent enzyme system which catalyzes the O2- and NADH-dependent epoxidation of short chain (C2 to C6) alkenes to their corresponding epoxides. Also able to catalyze the oxidation of a number of chlorinated alkenes, including trichloroethylene, cis- and trans-1,2-dichloroethylene, vinyl chloride, 1-chloropropylene, 1,3-dichloropropylene and 2,3-dichloropropylene. The sequence is that of Alkene monooxygenase system, oxygenase component subunit alpha from Xanthobacter autotrophicus (strain ATCC BAA-1158 / Py2).